The primary structure comprises 103 residues: Small ribosomal subunit protein uS10 (103 aa).

The protein belongs to the universal ribosomal protein uS10 family. Part of the 30S ribosomal subunit.

Its function is as follows. Involved in the binding of tRNA to the ribosomes. The sequence is that of Small ribosomal subunit protein uS10 from Alcanivorax borkumensis (strain ATCC 700651 / DSM 11573 / NCIMB 13689 / SK2).